The chain runs to 201 residues: Large ribosomal subunit protein uL4 (201 aa).

Residues 46–71 (QKTRAEITGSGKKPWRQKGTGRARSG) form a disordered region.

This sequence belongs to the universal ribosomal protein uL4 family. In terms of assembly, part of the 50S ribosomal subunit.

Its function is as follows. One of the primary rRNA binding proteins, this protein initially binds near the 5'-end of the 23S rRNA. It is important during the early stages of 50S assembly. It makes multiple contacts with different domains of the 23S rRNA in the assembled 50S subunit and ribosome. In terms of biological role, forms part of the polypeptide exit tunnel. This Klebsiella pneumoniae (strain 342) protein is Large ribosomal subunit protein uL4.